The primary structure comprises 432 residues: Glutamyl-tRNA reductase (432 aa).

Substrate is bound by residues 49 to 52 (TCNR), S101, 106 to 108 (EPQ), and Q112. C50 functions as the Nucleophile in the catalytic mechanism. Position 181–186 (181–186 (GAGETI)) interacts with NADP(+). Residues 408–432 (PEKPGYRHPPVATPIVRTDDANPAP) form a disordered region.

This sequence belongs to the glutamyl-tRNA reductase family. In terms of assembly, homodimer.

The enzyme catalyses (S)-4-amino-5-oxopentanoate + tRNA(Glu) + NADP(+) = L-glutamyl-tRNA(Glu) + NADPH + H(+). It functions in the pathway porphyrin-containing compound metabolism; protoporphyrin-IX biosynthesis; 5-aminolevulinate from L-glutamyl-tRNA(Glu): step 1/2. Its function is as follows. Catalyzes the NADPH-dependent reduction of glutamyl-tRNA(Glu) to glutamate 1-semialdehyde (GSA). This chain is Glutamyl-tRNA reductase, found in Xanthomonas campestris pv. campestris (strain 8004).